Reading from the N-terminus, the 424-residue chain is Serine--tRNA ligase (424 aa).

An L-serine-binding site is contributed by 233-235 (TAE). ATP-binding positions include 264-266 (RRE) and V280. L-serine is bound at residue E287. Residue 351-354 (EISS) coordinates ATP. Residue S386 coordinates L-serine.

It belongs to the class-II aminoacyl-tRNA synthetase family. Type-1 seryl-tRNA synthetase subfamily. As to quaternary structure, homodimer. The tRNA molecule binds across the dimer.

It is found in the cytoplasm. The catalysed reaction is tRNA(Ser) + L-serine + ATP = L-seryl-tRNA(Ser) + AMP + diphosphate + H(+). The enzyme catalyses tRNA(Sec) + L-serine + ATP = L-seryl-tRNA(Sec) + AMP + diphosphate + H(+). The protein operates within aminoacyl-tRNA biosynthesis; selenocysteinyl-tRNA(Sec) biosynthesis; L-seryl-tRNA(Sec) from L-serine and tRNA(Sec): step 1/1. Its function is as follows. Catalyzes the attachment of serine to tRNA(Ser). Is also able to aminoacylate tRNA(Sec) with serine, to form the misacylated tRNA L-seryl-tRNA(Sec), which will be further converted into selenocysteinyl-tRNA(Sec). The chain is Serine--tRNA ligase from Kosmotoga olearia (strain ATCC BAA-1733 / DSM 21960 / TBF 19.5.1).